The following is a 195-amino-acid chain: MGLQNEEKLELGCTGLQPKPKKWVLLMVRVVAFLATAAATLVMALNKETKTLVVATVGNTPIKVTLTAKFQHTPAFVFFVIANGMASFHNLLMIMVELCGQKLDYKGMRLAMVAILDMMTVALVSGGASAATFMAELGKNGNSHARWDKICDKFETFCDHGGAALIASSAGLILMMIISVMSIMKLLIKPKSDSS.

The Cytoplasmic segment spans residues M1–K22. A helical membrane pass occupies residues W23–M43. Topologically, residues A44–A75 are extracellular. The helical transmembrane segment at F76–V96 threads the bilayer. Over E97 to R109 the chain is Cytoplasmic. The chain crosses the membrane as a helical span at residues L110 to A130. Topologically, residues A131–A163 are extracellular. The chain crosses the membrane as a helical span at residues A164–M184. At K185–S195 the chain is on the cytoplasmic side.

The protein belongs to the Casparian strip membrane proteins (CASP) family. In terms of assembly, homodimer and heterodimers.

It is found in the cell membrane. This chain is CASP-like protein 1B1, found in Populus trichocarpa (Western balsam poplar).